Reading from the N-terminus, the 39-residue chain is Photosystem I reaction center subunit IX (39 aa).

The chain crosses the membrane as a helical span at residues 7–27 (FLTTAPVAFILFSSFVFALFI).

The protein belongs to the PsaJ family.

It is found in the cellular thylakoid membrane. Its function is as follows. May help in the organization of the PsaE and PsaF subunits. The protein is Photosystem I reaction center subunit IX of Synechococcus sp. (strain JA-3-3Ab) (Cyanobacteria bacterium Yellowstone A-Prime).